Consider the following 262-residue polypeptide: Acyl-[acyl-carrier-protein]--UDP-N-acetylglucosamine O-acyltransferase (262 aa).

It belongs to the transferase hexapeptide repeat family. LpxA subfamily. As to quaternary structure, homotrimer.

The protein localises to the cytoplasm. It carries out the reaction a (3R)-hydroxyacyl-[ACP] + UDP-N-acetyl-alpha-D-glucosamine = a UDP-3-O-[(3R)-3-hydroxyacyl]-N-acetyl-alpha-D-glucosamine + holo-[ACP]. Its pathway is glycolipid biosynthesis; lipid IV(A) biosynthesis; lipid IV(A) from (3R)-3-hydroxytetradecanoyl-[acyl-carrier-protein] and UDP-N-acetyl-alpha-D-glucosamine: step 1/6. Functionally, involved in the biosynthesis of lipid A, a phosphorylated glycolipid that anchors the lipopolysaccharide to the outer membrane of the cell. In Burkholderia mallei (strain NCTC 10247), this protein is Acyl-[acyl-carrier-protein]--UDP-N-acetylglucosamine O-acyltransferase.